The chain runs to 100 residues: Small ribosomal subunit protein bS21 (100 aa).

Residues 61-100 (KLQREGLLPMKPKPVFGAGPGGDRGRGPAAGAGAGPRGPR) form a disordered region. Positions 78–100 (AGPGGDRGRGPAAGAGAGPRGPR) are enriched in gly residues.

This sequence belongs to the bacterial ribosomal protein bS21 family.

The protein is Small ribosomal subunit protein bS21 of Rhodopseudomonas palustris (strain BisB18).